The following is a 1362-amino-acid chain: DNA-directed RNA polymerase subunit beta'' (1362 aa).

Residues Cys-224, Cys-295, Cys-302, and Cys-305 each coordinate Zn(2+).

It belongs to the RNA polymerase beta' chain family. RpoC2 subfamily. In terms of assembly, in plastids the minimal PEP RNA polymerase catalytic core is composed of four subunits: alpha, beta, beta', and beta''. When a (nuclear-encoded) sigma factor is associated with the core the holoenzyme is formed, which can initiate transcription. The cofactor is Zn(2+).

The protein localises to the plastid. Its subcellular location is the chloroplast. It catalyses the reaction RNA(n) + a ribonucleoside 5'-triphosphate = RNA(n+1) + diphosphate. In terms of biological role, DNA-dependent RNA polymerase catalyzes the transcription of DNA into RNA using the four ribonucleoside triphosphates as substrates. The polypeptide is DNA-directed RNA polymerase subunit beta'' (Helianthus annuus (Common sunflower)).